The chain runs to 399 residues: Serine/threonine-protein kinase PKZ1 (399 aa).

The disordered stretch occupies residues 30-50 (PMQCAYQTQSHSNPEGAKRGR). One can recognise a Protein kinase domain in the interval 92–371 (WQLFDQIGAG…ADQMLQHPWM (280 aa)). Residues 98-106 (IGAGAFGVV) and Lys-121 contribute to the ATP site. The active-site Proton acceptor is Asp-219.

Belongs to the protein kinase superfamily. CAMK Ser/Thr protein kinase family.

It catalyses the reaction L-seryl-[protein] + ATP = O-phospho-L-seryl-[protein] + ADP + H(+). It carries out the reaction L-threonyl-[protein] + ATP = O-phospho-L-threonyl-[protein] + ADP + H(+). May regulate an early stage of the zoospore pathway. This chain is Serine/threonine-protein kinase PKZ1, found in Phytophthora infestans (strain T30-4) (Potato late blight agent).